An 88-amino-acid polypeptide reads, in one-letter code: MSRSLKKGAYADPSLLKKVEAANASVSKKPIKTWSRRSQIFPNFVGLTFEVHNGKTFLKVYVTEDMIGHKLGEFAPTRNFKNHTEAKR.

This sequence belongs to the universal ribosomal protein uS19 family.

Protein S19 forms a complex with S13 that binds strongly to the 16S ribosomal RNA. The protein is Small ribosomal subunit protein uS19 of Ureaplasma parvum serovar 3 (strain ATCC 27815 / 27 / NCTC 11736).